A 134-amino-acid polypeptide reads, in one-letter code: Inner membrane protein YqjE (134 aa).

At M1 to G55 the chain is on the cytoplasmic side. The helical transmembrane segment at L56–V76 threads the bilayer. The Periplasmic portion of the chain corresponds to D77 to N83. A helical membrane pass occupies residues A84–L104. Residues R105–Q134 lie on the Cytoplasmic side of the membrane.

The protein resides in the cell inner membrane. The protein is Inner membrane protein YqjE (yqjE) of Escherichia coli O157:H7.